The following is a 142-amino-acid chain: Cell division protein SepF (142 aa).

Residues 21–31 show a composition bias toward acidic residues; the sequence is ETTTVEEEREE. The interval 21–46 is disordered; it reads ETTTVEEEREEQESSHKRQPAISRTN.

It belongs to the SepF family. In terms of assembly, homodimer. Interacts with FtsZ.

Its subcellular location is the cytoplasm. In terms of biological role, cell division protein that is part of the divisome complex and is recruited early to the Z-ring. Probably stimulates Z-ring formation, perhaps through the cross-linking of FtsZ protofilaments. Its function overlaps with FtsA. The polypeptide is Cell division protein SepF (Brevibacillus brevis (strain 47 / JCM 6285 / NBRC 100599)).